The chain runs to 320 residues: Solute carrier family 25 member 33 (320 aa).

Solcar repeat units lie at residues 9-118, 126-213, and 231-315; these read ENTL…AKEQ, NSNT…LKKC, and SGFF…IVYL. A run of 6 helical transmembrane segments spans residues 12–32, 49–65, 121–141, 190–210, 233–253, and 298–318; these read LLHLFAGGCGGTVGAIFTCPL, VYYPQVHLGTISGAGMV, GIFVPNSNTVHILSAGSAAFV, LTASYAGISETIICFAIYESL, FFGLMAAAAVSKGCASCIAYP, and QIPNTAIVLSTYEFIVYLLGE.

It belongs to the mitochondrial carrier (TC 2.A.29) family.

Its subcellular location is the mitochondrion inner membrane. It catalyses the reaction UTP(in) + UDP(out) = UTP(out) + UDP(in). The catalysed reaction is dUTP(out) + UTP(in) = dUTP(in) + UTP(out). It carries out the reaction 5-methyl-UTP(out) + UTP(in) = 5-methyl-UTP(in) + UTP(out). The enzyme catalyses 5-methyl-UDP(out) + UTP(in) = 5-methyl-UDP(in) + UTP(out). It catalyses the reaction UTP(in) + CTP(out) = UTP(out) + CTP(in). The catalysed reaction is CDP(out) + UTP(in) = CDP(in) + UTP(out). It carries out the reaction dCTP(out) + UTP(in) = dCTP(in) + UTP(out). The enzyme catalyses dCDP(out) + UTP(in) = dCDP(in) + UTP(out). It catalyses the reaction UTP(in) + GTP(out) = UTP(out) + GTP(in). The catalysed reaction is UTP(in) + GDP(out) = UTP(out) + GDP(in). It carries out the reaction dGTP(out) + UTP(in) = dGTP(in) + UTP(out). The enzyme catalyses dGDP(out) + UTP(in) = dGDP(in) + UTP(out). It catalyses the reaction ITP(out) + UTP(in) = ITP(in) + UTP(out). Mitochondrial transporter that imports/exports pyrimidine nucleotides into and from mitochondria. Selectively transports uridine, thymidine, guanosine, cytosine and inosine (deoxy)nucleoside di- and triphosphates by an antiport mechanism. May import (deoxy)nucleoside triphosphates in exchange for intramitochondrial (deoxy)nucleoside diphosphates, thus providing precursors necessary for de novo synthesis of mitochondrial DNA and RNA while exporting products of their catabolism. Participates in mitochondrial genome maintenance, regulation of mitochondrial membrane potential and mitochondrial respiration. Upon INS or IGF1 stimulation regulates cell growth and proliferation by controlling mitochondrial DNA replication and transcription, the ratio of mitochondria-to nuclear-encoded components of the electron transport chain resulting in control of mitochondrial ROS production. Participates in dendritic cell endocytosis and may associate with mitochondrial oxidative phosphorylation. In Mus musculus (Mouse), this protein is Solute carrier family 25 member 33 (Slc25a33).